The sequence spans 387 residues: TSC22 domain family protein 4 (387 aa).

Disordered stretches follow at residues 1–85 and 135–232; these read MSGG…GEPY and ISTP…RRDG. Residues 31–51 are compositionally biased toward pro residues; that stretch reads PVPPALAGPPPRLPNGDPNPD. T57 bears the Phosphothreonine mark. A phosphoserine mark is found at S62 and S165. The residue at position 183 (T183) is a Phosphothreonine. Phosphoserine occurs at positions 187, 189, and 219. T223 is modified (phosphothreonine). A phosphoserine mark is found at S254, S258, and S271. The segment at 336–357 is leucine-zipper; that stretch reads LKEQIRDLAERNAALEQENGLL. S362 carries the phosphoserine modification. A disordered region spans residues 368-387; it reads QLPSSGLPRLGPSAPNGPSI.

This sequence belongs to the TSC-22/Dip/Bun family. Forms a homodimer or heterodimer. Forms a heterodimer with TSC22D1 isoforms 1 and 2. Interacts with NRBP1. In terms of tissue distribution, expressed in the liver (at protein level). Expressed in Purkinje cells and proliferating cerebellar granular neurons (at protein level). Expressed in the cortex, medulla and papilla of the kidney.

Its subcellular location is the nucleus. It localises to the cytoplasm. The protein localises to the cell projection. It is found in the dendrite. The protein resides in the synapse. In terms of biological role, binds DNA and acts as a transcriptional repressor. Involved in the regulation of systematic glucose homeostasis and insulin sensitivity, via transcriptional repression of downstream insulin signaling targets such as OBP2A/LCN13. Acts as a negative regulator of lipogenic gene expression in hepatocytes and thereby mediates the control of very low-density lipoprotein release. May play a role in neurite elongation and survival. The protein is TSC22 domain family protein 4 of Mus musculus (Mouse).